Here is a 487-residue protein sequence, read N- to C-terminus: Fibroblast growth factor receptor-like 1 (487 aa).

The first 18 residues, 1-18 (MGLQLALLLAGIVALSDS), serve as a signal peptide directing secretion. Residues 19-371 (ARGPPRIADK…PSSVSSLPWP (353 aa)) are Extracellular-facing. The Ig-like C2-type 1 domain occupies 23 to 109 (PRIADKVIHR…GSTNVNYTLI (87 aa)). Residues cysteine 45 and cysteine 93 are joined by a disulfide bond. Asparagine 105 carries an N-linked (GlcNAc...) asparagine glycan. Positions 115-125 (SSGKNSQTPEG) are enriched in polar residues. Residues 115-147 (SSGKNSQTPEGSNGEYEDHSGKQWAQPRFTQPA) are disordered. 2 consecutive Ig-like C2-type domains span residues 141–231 (PRFT…YKVE) and 240–348 (PILT…AFLT). A disulfide bridge connects residues cysteine 166 and cysteine 215. 3 N-linked (GlcNAc...) asparagine glycosylation sites follow: asparagine 225, asparagine 249, and asparagine 287. A disulfide bridge links cysteine 262 with cysteine 332. Residues 372-392 (VIIGIPAGAVFIFGTILLWLC) traverse the membrane as a helical segment. The Cytoplasmic segment spans residues 393–487 (QTKKKPCSPP…HQHQHIQYQC (95 aa)).

In terms of assembly, interacts with heparin and FGF2. Expressed in cartilaginous structures.

It is found in the cell membrane. Has a negative effect on cell proliferation. In Gallus gallus (Chicken), this protein is Fibroblast growth factor receptor-like 1 (FGFRL1).